The primary structure comprises 100 residues: C-X-C motif chemokine 11 (100 aa).

The signal sequence occupies residues 1–21 (MNRKVTAIALAAIIWATAAQG). 2 disulfide bridges follow: cysteine 30/cysteine 57 and cysteine 32/cysteine 74.

The protein belongs to the intercrine alpha (chemokine CxC) family. Interacts with TNFAIP6 (via Link domain).

It localises to the secreted. In terms of biological role, chemotactic for interleukin-activated T-cells but not unstimulated T-cells, neutrophils or monocytes. Induces calcium release in activated T-cells. Binds to CXCR3. May play an important role in CNS diseases which involve T-cell recruitment. May play a role in skin immune responses. The polypeptide is C-X-C motif chemokine 11 (Cxcl11) (Mus musculus (Mouse)).